The primary structure comprises 307 residues: Elongation factor Ts (307 aa).

Residues 80–83 (TDFV) are involved in Mg(2+) ion dislocation from EF-Tu.

It belongs to the EF-Ts family.

The protein resides in the cytoplasm. Its function is as follows. Associates with the EF-Tu.GDP complex and induces the exchange of GDP to GTP. It remains bound to the aminoacyl-tRNA.EF-Tu.GTP complex up to the GTP hydrolysis stage on the ribosome. The polypeptide is Elongation factor Ts (Rhizorhabdus wittichii (strain DSM 6014 / CCUG 31198 / JCM 15750 / NBRC 105917 / EY 4224 / RW1) (Sphingomonas wittichii)).